Here is a 366-residue protein sequence, read N- to C-terminus: 5-hydroxytryptamine receptor 1F (366 aa).

The Extracellular segment spans residues 1 to 24 (MDFLNSSDQNLTSEELLNRMPSKI). N-linked (GlcNAc...) asparagine glycosylation is found at N5 and N10. Residues 25 to 49 (LVSLTLSGLALMTTTINCLVITAII) traverse the membrane as a helical segment. Residues 50 to 59 (VTRKLHHPAN) are Cytoplasmic-facing. A helical membrane pass occupies residues 60 to 81 (YLICSLAVTDFLVAVLVMPFSI). Residues 82-96 (VYIVRESWIMGQGLC) lie on the Extracellular side of the membrane. A disulfide bridge connects residues C96 and C172. The helical transmembrane segment at 97–119 (DLWLSVDIICCTCSILHLSAIAL) threads the bilayer. Serotonin is bound by residues D103 and C107. A DRY motif; important for ligand-induced conformation changes motif is present at residues 120–122 (DRY). Topologically, residues 120 to 139 (DRYRAITDAVEYARKRTPRH) are cytoplasmic. The helical transmembrane segment at 140–159 (AGITITTVWVISVFISVPPL) threads the bilayer. Over 160-178 (FWRHQGNSRDDQCIIKHDH) the chain is Extracellular. Residues 179–202 (IVSTIYSTFGAFYIPLVLILILYY) form a helical membrane-spanning segment. Residues 203-291 (KIYRAARTLY…KISGTRERKA (89 aa)) are Cytoplasmic-facing. Residues 292–315 (ATTLGLILGAFVICWLPFFVKELV) form a helical membrane-spanning segment. Residues 316–327 (VNICEKCKISEE) lie on the Extracellular side of the membrane. Residues 328–350 (MSNFLAWLGYLNSLINPLIYTIF) traverse the membrane as a helical segment. The NPxxY motif; important for ligand-induced conformation changes and signaling signature appears at 343-347 (NPLIY). Topologically, residues 351–366 (NEDFKKAFQKLVRCRN) are cytoplasmic.

This sequence belongs to the G-protein coupled receptor 1 family.

The protein localises to the cell membrane. Functionally, G-protein coupled receptor for 5-hydroxytryptamine (serotonin). Also functions as a receptor for various alkaloids and psychoactive substances. Ligand binding causes a conformation change that triggers signaling via guanine nucleotide-binding proteins (G proteins) and modulates the activity of downstream effectors, such as adenylate cyclase. HTR1F is coupled to G(i)/G(o) G alpha proteins and mediates inhibitory neurotransmission by inhibiting adenylate cyclase activity. The chain is 5-hydroxytryptamine receptor 1F (Htr1f) from Rattus norvegicus (Rat).